The sequence spans 900 residues: Periodic tryptophan protein 2 (900 aa).

5 WD repeats span residues 10-47, 50-89, 91-129, 139-178, and 185-229; these read GAPY…SVTL, ETST…VLHR, TFKD…RAVL, NSDD…GVLN, and GHRD…VKMD. The disordered stretch occupies residues 228 to 284; it reads MDESEDGHSEPPSPVTPDRADEVMVENGGGVGTELKKRKEYDGKGLESDEEGDDDDE. Residues 261–274 show a composition bias toward basic and acidic residues; sequence ELKKRKEYDGKGLE. Residue Ser275 is modified to Phosphoserine. The span at 275–284 shows a compositional bias: acidic residues; it reads SDEEGDDDDE. 8 WD repeats span residues 302-341, 344-384, 387-426, 429-468, 472-512, 515-554, 557-596, and 619-658; these read QASA…CIHL, ISRQ…YILK, GHYF…CFIT, EHTN…NYKT, PTPR…IKDI, GHEA…GTVE, RHNH…LMYT, and SSGK…LLRR. The segment at 684–720 is disordered; it reads PIDLIDDDNSDEEGGIDKQSRGNLGYDLPGSRPNRGR. Acidic residues predominate over residues 687–697; sequence LIDDDNSDEEG. The stretch at 720–759 is one WD 14 repeat; the sequence is RPIIRTKSLSIAPTGRSFAAATTEGVLIFSIDDTFIFDPT.

It belongs to the WD repeat PWP2 family. In terms of assembly, component of the ribosomal small subunit (SSU) processome. Interacts with TBP1 in the nucleus. Expressed constitutively and ubiquitously; observed in seeds, seedlings, roots, leaves, stems, flowers and siliques.

The protein localises to the nucleus. The protein resides in the nucleolus. Involved in nucleolar processing of pre-18S ribosomal RNA. Plays a role early in ribosome biogenesis, especially in the maturation of 5.8S rRNA. Required for guard cell functions. The polypeptide is Periodic tryptophan protein 2 (Arabidopsis thaliana (Mouse-ear cress)).